The primary structure comprises 299 residues: Ribonuclease H2 subunit A (299 aa).

An N-acetylmethionine modification is found at Met-1. Residues 28-250 (PCVLGVDEAG…AQTILEKEAE (223 aa)) enclose the RNase H type-2 domain. Residues Asp-34, Glu-35, and Asp-141 each coordinate a divalent metal cation. A phosphothreonine mark is found at Thr-204 and Thr-216. Ser-257 and Ser-277 each carry phosphoserine.

Belongs to the RNase HII family. Eukaryotic subfamily. In terms of assembly, the RNase H2 complex is a heterotrimer composed of the catalytic subunit RNASEH2A and the non-catalytic subunits RNASEH2B and RNASEH2C. Requires Mn(2+) as cofactor. The cofactor is Mg(2+).

The protein localises to the nucleus. The catalysed reaction is Endonucleolytic cleavage to 5'-phosphomonoester.. Its function is as follows. Catalytic subunit of RNase HII, an endonuclease that specifically degrades the RNA of RNA:DNA hybrids. Participates in DNA replication, possibly by mediating the removal of lagging-strand Okazaki fragment RNA primers during DNA replication. Mediates the excision of single ribonucleotides from DNA:RNA duplexes. In Homo sapiens (Human), this protein is Ribonuclease H2 subunit A (RNASEH2A).